The primary structure comprises 393 residues: NAD(P)H-quinone oxidoreductase subunit H, chloroplastic (393 aa).

This sequence belongs to the complex I 49 kDa subunit family. As to quaternary structure, NDH is composed of at least 16 different subunits, 5 of which are encoded in the nucleus.

It is found in the plastid. The protein resides in the chloroplast thylakoid membrane. The catalysed reaction is a plastoquinone + NADH + (n+1) H(+)(in) = a plastoquinol + NAD(+) + n H(+)(out). It carries out the reaction a plastoquinone + NADPH + (n+1) H(+)(in) = a plastoquinol + NADP(+) + n H(+)(out). In terms of biological role, NDH shuttles electrons from NAD(P)H:plastoquinone, via FMN and iron-sulfur (Fe-S) centers, to quinones in the photosynthetic chain and possibly in a chloroplast respiratory chain. The immediate electron acceptor for the enzyme in this species is believed to be plastoquinone. Couples the redox reaction to proton translocation, and thus conserves the redox energy in a proton gradient. This is NAD(P)H-quinone oxidoreductase subunit H, chloroplastic from Agrostis stolonifera (Creeping bentgrass).